Here is a 412-residue protein sequence, read N- to C-terminus: MAEGEDGTWWRSWLQQSYSSVRDKSAEALEFMKRDLTEFTRVVQHDTACTIAATASVVKDKLVVEGSSGTTDKVKKGLSNFLGVISDTFAPSPDKTIDCDVITLMATPSGTTELYDSTKARLYSLQSDPATYCNEPDGSPAEFDAWLAYWDPEHRKAEISELLVTSPSIRALYTKMVPAAVSHSEFWQRYFYKVHQLEQEEARRDALKQRADQSVHSEEPQWEEEEEDFVGAASAPNFKLEEKYVISPPTIPTLHVEDKSEKMAELNRDHTSITSPSESSESISPITQIANPEYIEQTATKESSPRPLTVKEKNGAGTDESSAHAPVEQITGKSNAQIGTHREDPPSDLRVFELNSDSGKSTPSNNGQKGSSTDVSEDWEKDFDMTEEEVQMALSRVEVSGEVDDEDWENWE.

The region spanning 146–198 (WLAYWDPEHRKAEISELLVTSPSIRALYTKMVPAAVSHSEFWQRYFYKVHQLE) is the BSD domain. Basic and acidic residues-rich tracts occupy residues 208–219 (KQRADQSVHSEE) and 255–271 (HVED…RDHT). Disordered regions lie at residues 208–228 (KQRA…EEED) and 255–383 (HVED…EKDF). The span at 272-287 (SITSPSESSESISPIT) shows a compositional bias: low complexity. The span at 340 to 351 (THREDPPSDLRV) shows a compositional bias: basic and acidic residues. Over residues 355-374 (NSDSGKSTPSNNGQKGSSTD) the composition is skewed to polar residues.

The chain is BSD domain-containing protein 1 (bsdc1) from Xenopus tropicalis (Western clawed frog).